A 649-amino-acid polypeptide reads, in one-letter code: Protein teflon (649 aa).

The C2H2-type 1 zinc finger occupies 33-56 (LYCHFCRDLFTQLPEFLRHLQSNH). The disordered stretch occupies residues 78 to 126 (EQGKAHEDAQSAGHNSSSGDSSSLMNSEDSRAIEGSEDNSDNSPMKPEQ). The span at 88–104 (SAGHNSSSGDSSSLMNS) shows a compositional bias: low complexity. 2 consecutive C2H2-type zinc fingers follow at residues 599–621 (YFCK…LISH) and 625–648 (FQCT…RNAH).

The protein belongs to the Teflon family. As to expression, expressed at a low level in a variety of tissues, highest expression is in testis.

It is found in the nucleus. The protein resides in the chromosome. Functionally, specifically required in males for proper segregation of autosomal bivalents at meiosis I. Expression is required in the male germ line prior to spermatocyte stage S4. May have a role as a bridging molecule maintaining adhesion to hold autosome bivalents together via heterochromatic connections. This is Protein teflon from Drosophila melanogaster (Fruit fly).